The following is a 646-amino-acid chain: DNA mismatch repair protein MutL (646 aa).

Disordered regions lie at residues 356–380 and 415–452; these read FENR…NENS and TKNS…AKPH. The segment covering 424-436 has biased composition (low complexity); the sequence is SEATSNEAASAEI.

It belongs to the DNA mismatch repair MutL/HexB family.

This protein is involved in the repair of mismatches in DNA. It is required for dam-dependent methyl-directed DNA mismatch repair. May act as a 'molecular matchmaker', a protein that promotes the formation of a stable complex between two or more DNA-binding proteins in an ATP-dependent manner without itself being part of a final effector complex. This Staphylococcus carnosus (strain TM300) protein is DNA mismatch repair protein MutL.